Consider the following 68-residue polypeptide: Palustrin-1c (68 aa).

The first 22 residues, 1–22 (MFTTKKSLLLLFFLGTISLSLC), serve as a signal peptide directing secretion. A propeptide spanning residues 23 to 39 (EEERGADEEEGDGEKLT) is cleaved from the precursor. A disulfide bridge links C62 with C68.

As to expression, expressed by the skin glands.

Its subcellular location is the secreted. Its function is as follows. Antimicrobial activity against Gram-negative bacterium E.coli. Stimulates insulin release. In Lithobates palustris (Pickerel frog), this protein is Palustrin-1c.